The chain runs to 236 residues: tRNA (guanine-N(7)-)-methyltransferase (236 aa).

Residues D35, E60, N87, and D113 each coordinate S-adenosyl-L-methionine. The active site involves D113. 2 residues coordinate substrate: K117 and D149.

Belongs to the class I-like SAM-binding methyltransferase superfamily. TrmB family.

The catalysed reaction is guanosine(46) in tRNA + S-adenosyl-L-methionine = N(7)-methylguanosine(46) in tRNA + S-adenosyl-L-homocysteine. The protein operates within tRNA modification; N(7)-methylguanine-tRNA biosynthesis. Its function is as follows. Catalyzes the formation of N(7)-methylguanine at position 46 (m7G46) in tRNA. In Prochlorococcus marinus (strain MIT 9313), this protein is tRNA (guanine-N(7)-)-methyltransferase.